Reading from the N-terminus, the 102-residue chain is Small ribosomal subunit protein uS10 (102 aa).

The protein belongs to the universal ribosomal protein uS10 family. As to quaternary structure, part of the 30S ribosomal subunit.

Functionally, involved in the binding of tRNA to the ribosomes. In Xanthobacter autotrophicus (strain ATCC BAA-1158 / Py2), this protein is Small ribosomal subunit protein uS10.